We begin with the raw amino-acid sequence, 429 residues long: Histidine--tRNA ligase (429 aa).

It belongs to the class-II aminoacyl-tRNA synthetase family. As to quaternary structure, homodimer.

It localises to the cytoplasm. The catalysed reaction is tRNA(His) + L-histidine + ATP = L-histidyl-tRNA(His) + AMP + diphosphate + H(+). The protein is Histidine--tRNA ligase of Desulfotalea psychrophila (strain LSv54 / DSM 12343).